Here is a 396-residue protein sequence, read N- to C-terminus: Phosphoglycerate kinase (396 aa).

Substrate is bound by residues 21–23, Arg36, 59–62, Arg113, and Arg146; these read DLN and HLGR. ATP contacts are provided by residues Lys197, Glu319, and 345–348; that span reads GGDT.

The protein belongs to the phosphoglycerate kinase family. As to quaternary structure, monomer.

Its subcellular location is the cytoplasm. It catalyses the reaction (2R)-3-phosphoglycerate + ATP = (2R)-3-phospho-glyceroyl phosphate + ADP. It participates in carbohydrate degradation; glycolysis; pyruvate from D-glyceraldehyde 3-phosphate: step 2/5. The sequence is that of Phosphoglycerate kinase from Legionella pneumophila (strain Corby).